Consider the following 286-residue polypeptide: Bifunctional protein FolD (286 aa).

NADP(+) is bound by residues 164–166 and isoleucine 230; that span reads GTS.

It belongs to the tetrahydrofolate dehydrogenase/cyclohydrolase family. In terms of assembly, homodimer.

The enzyme catalyses (6R)-5,10-methylene-5,6,7,8-tetrahydrofolate + NADP(+) = (6R)-5,10-methenyltetrahydrofolate + NADPH. The catalysed reaction is (6R)-5,10-methenyltetrahydrofolate + H2O = (6R)-10-formyltetrahydrofolate + H(+). It functions in the pathway one-carbon metabolism; tetrahydrofolate interconversion. Functionally, catalyzes the oxidation of 5,10-methylenetetrahydrofolate to 5,10-methenyltetrahydrofolate and then the hydrolysis of 5,10-methenyltetrahydrofolate to 10-formyltetrahydrofolate. The chain is Bifunctional protein FolD from Mesoplasma florum (strain ATCC 33453 / NBRC 100688 / NCTC 11704 / L1) (Acholeplasma florum).